The chain runs to 183 residues: Apo-citrate lyase phosphoribosyl-dephospho-CoA transferase (183 aa).

This sequence belongs to the CitX family.

It catalyses the reaction apo-[citrate lyase ACP] + 2'-(5''-triphospho-alpha-D-ribosyl)-3'-dephospho-CoA = holo-[citrate lyase ACP] + diphosphate. In terms of biological role, transfers 2-(5''-triphosphoribosyl)-3'-dephosphocoenzyme-A on a serine residue to the apo-acyl carrier protein (gamma chain) of the citrate lyase to yield holo-acyl carrier protein. This Escherichia coli O7:K1 (strain IAI39 / ExPEC) protein is Apo-citrate lyase phosphoribosyl-dephospho-CoA transferase.